A 130-amino-acid polypeptide reads, in one-letter code: Small ribosomal subunit protein uS8 (130 aa).

This sequence belongs to the universal ribosomal protein uS8 family. Part of the 30S ribosomal subunit.

Functionally, one of the primary rRNA binding proteins, it binds directly to 16S rRNA central domain where it helps coordinate assembly of the platform of the 30S subunit. This Methanopyrus kandleri (strain AV19 / DSM 6324 / JCM 9639 / NBRC 100938) protein is Small ribosomal subunit protein uS8.